A 212-amino-acid polypeptide reads, in one-letter code: Protein-L-isoaspartate O-methyltransferase (212 aa).

Serine 61 is a catalytic residue.

Belongs to the methyltransferase superfamily. L-isoaspartyl/D-aspartyl protein methyltransferase family.

The protein localises to the cytoplasm. The enzyme catalyses [protein]-L-isoaspartate + S-adenosyl-L-methionine = [protein]-L-isoaspartate alpha-methyl ester + S-adenosyl-L-homocysteine. In terms of biological role, catalyzes the methyl esterification of L-isoaspartyl residues in peptides and proteins that result from spontaneous decomposition of normal L-aspartyl and L-asparaginyl residues. It plays a role in the repair and/or degradation of damaged proteins. This is Protein-L-isoaspartate O-methyltransferase from Pseudoalteromonas atlantica (strain T6c / ATCC BAA-1087).